A 664-amino-acid polypeptide reads, in one-letter code: Phosphomethylpyrimidine synthase (664 aa).

Substrate is bound by residues N235, M264, Y293, H329, 349–351 (SRG), 390–393 (DGMR), and E429. Zn(2+) is bound at residue H433. Y456 is a substrate binding site. H497 lines the Zn(2+) pocket. [4Fe-4S] cluster is bound by residues C577, C580, and C585.

Belongs to the ThiC family. In terms of assembly, homodimer. It depends on [4Fe-4S] cluster as a cofactor.

The catalysed reaction is 5-amino-1-(5-phospho-beta-D-ribosyl)imidazole + S-adenosyl-L-methionine = 4-amino-2-methyl-5-(phosphooxymethyl)pyrimidine + CO + 5'-deoxyadenosine + formate + L-methionine + 3 H(+). It participates in cofactor biosynthesis; thiamine diphosphate biosynthesis. In terms of biological role, catalyzes the synthesis of the hydroxymethylpyrimidine phosphate (HMP-P) moiety of thiamine from aminoimidazole ribotide (AIR) in a radical S-adenosyl-L-methionine (SAM)-dependent reaction. In Shewanella amazonensis (strain ATCC BAA-1098 / SB2B), this protein is Phosphomethylpyrimidine synthase.